We begin with the raw amino-acid sequence, 218 residues long: Dynein axonemal assembly factor 6 (218 aa).

The tract at residues 66–103 (MGPGNIGPPKAKESKAIPEPRSDESENIWNPEEVPEGA) is disordered. Residues 75-89 (KAKESKAIPEPRSDE) show a composition bias toward basic and acidic residues.

Belongs to the PIH1 family. Interacts with HSPA1A/B, HSP90AA1 and DNAI2. Interacts with DNAAF2 and DNAAF4. Specifically expressed in testis. Detected in pachytene spermatocytes from 5 weeks of age and in pachytene and diplotene spermatocytes of adult mice. Not detected in spermatids or mature sperm.

The protein resides in the cytoplasm. Its subcellular location is the golgi apparatus. The protein localises to the trans-Golgi network. Functionally, plays a role in cytoplasmic pre-assembly of axonemal dynein. In Mus musculus (Mouse), this protein is Dynein axonemal assembly factor 6.